The chain runs to 242 residues: MDPYTVAIIKKLGIEEQVETAATKSPFIEGLANGTAPPGAFKRWLYEDRIYVQGCSLCLAKAINAITHEKGFPKEALDLFLGAYNVITPELAHFEARCKESNVEMPKLKPVPTSWEQALQDNKPEEYYHLSAPDCKSYIQFMTQELFEIPGTSGIDYFMAFYLNEVIYHRAWKFVRESKQFQKNCPEEMEFVKWWGQPSFGKFVENLARSIQDVPFTSATVDIAKKICNFEYRFFSTAFEKA.

It localises to the cytoplasm. It is found in the nucleus. This is an uncharacterized protein from Schizosaccharomyces pombe (strain 972 / ATCC 24843) (Fission yeast).